The following is a 1245-amino-acid chain: Structural polyprotein (1245 aa).

The disordered stretch occupies residues 1-106 (MNRGFFNMLG…KPKPGKRQRM (106 aa)). The tract at residues 37–70 (GLASQIQQLTTAVSALVIGQATRPQPPRPRPPPR) is host transcription inhibition. Residues 38 to 49 (LASQIQQLTTAV) show a composition bias toward polar residues. Residues 63 to 100 (PRPRPPPRQKKQAPKQPPKPKKPKTQEKKKKQPAKPKP) carry the Nuclear localization signal motif. Residues 67-106 (PPPRQKKQAPKQPPKPKKPKTQEKKKKQPAKPKPGKRQRM) show a composition bias toward basic residues. Positions 86 to 115 (KTQEKKKKQPAKPKPGKRQRMALKLEADRL) are binding to the viral RNA. The ribosome-binding stretch occupies residues 100–114 (PGKRQRMALKLEADR). In terms of domain architecture, Peptidase S3 spans 114 to 264 (RLFDVKNEDG…KTTPEGTEEW (151 aa)). The active-site Charge relay system is the His141. A Nuclear export signal motif is present at residues 146-156 (IDHPVLSKLKF). Positions 157–162 (TKSSAY) are interaction with spike glycoprotein E2. Residue Asp163 is the Charge relay system of the active site. The segment at 185–195 (PEGFYNWHHGA) is dimerization of the capsid protein. The active-site Charge relay system is the Ser215. The tract at residues 221 to 225 (DNSGR) is dimerization of the capsid protein. Residues 249–253 (SKGKT) are interaction with spike glycoprotein E2. Residues 265-279 (SAAPLVTAMCLLGNV) are functions as an uncleaved signal peptide for the precursor of protein E3/E2. Asn278 carries an N-linked (GlcNAc...) asparagine; by host glycan. Disulfide bonds link Cys283/Cys289, Cys480/Cys594, Cys529/Cys554, and Cys531/Cys548. Topologically, residues 329-690 (SVIDDFTLTS…HEIVQHYYHR (362 aa)) are extracellular. An N-linked (GlcNAc...) asparagine; by host glycan is attached at Asn524. Asn646 carries an N-linked (GlcNAc...) asparagine; by host glycan. Positions 682–730 (EIVQHYYHRHPVYTILAVASATVAMMIGVTVAVLCACKARRECLTPYAL) form a coiled coil. A helical transmembrane segment spans residues 691–718 (HPVYTILAVASATVAMMIGVTVAVLCAC). The segment at 719-723 (KARRE) is interaction with the capsid protein. Residues 719 to 751 (KARRECLTPYALAPNAVIPTSLALLCCVRSANA) are Cytoplasmic-facing. S-palmitoyl cysteine; by host attachment occurs at residues Cys724, Cys744, and Cys745. A disulfide bridge links Cys724 with Cys745. The Extracellular segment spans residues 752-763 (ETFTETMSYLWS). A helical transmembrane segment spans residues 764–784 (NSQPFFWVQLCIPLAAFIVLM). Arg785 is a topological domain (cytoplasmic). A helical membrane pass occupies residues 786–806 (CCSCCLPFLVVAGAYLAKVDA). Over 807 to 1214 (YEHATTVPNV…QAAISKTSWS (408 aa)) the chain is Extracellular. 4 cysteine pairs are disulfide-bonded: Cys855-Cys920, Cys868-Cys900, Cys869-Cys902, and Cys874-Cys884. An E1 fusion peptide loop region spans residues 890-907 (VYPFMWGGAQCFCDSENS). Asn945 and Asn1051 each carry an N-linked (GlcNAc...) asparagine; by host glycan. 4 disulfides stabilise this stretch: Cys1065/Cys1077, Cys1107/Cys1182, Cys1112/Cys1186, and Cys1134/Cys1176. Residues 1196–1245 (TPHKNDQEFQAAISKTSWSWLFALFGGASSLLIIGLMIFACSMMLTSTRR) adopt a coiled-coil conformation. A helical transmembrane segment spans residues 1215 to 1239 (WLFALFGGASSLLIIGLMIFACSMM). Topologically, residues 1240–1245 (LTSTRR) are cytoplasmic.

Belongs to the alphavirus structural polyprotein family. In terms of assembly, homomultimer. Interacts with host karyopherin KPNA4; this interaction allows the nuclear import of the viral capsid protein. Interacts with spike glycoprotein E2. Interacts with host IRAK1; the interaction leads to inhibition of IRAK1-dependent signaling. The precursor of protein E3/E2 and E1 form a heterodimer shortly after synthesis. As to quaternary structure, the precursor of protein E3/E2 and E1 form a heterodimer shortly after synthesis. Processing of the precursor of protein E3/E2 into E2 and E3 results in a heterodimer of the spike glycoproteins E2 and E1. Spike at virion surface are constituted of a trimer of E2-E1 heterodimers. After target cell attachment and endocytosis, E1 change conformation to form homotrimers. E2-E1 heterodimers interact with host VLDLR or LRP8/APOER2 to mediate viral entry. Interacts with 6K protein. In terms of assembly, interacts with spike glycoprotein E1. Processing of the precursor of protein E3/E2 into E2 and E3 results in a heterodimer of the spike glycoproteins E2 and E1. Spike at virion surface are constituted of a trimer of E2-E1 heterodimers. E2-E1 heterodimers interact with host VLDLR or LRP8/APOER2 to mediate viral entry. Interacts with 6K protein. Interacts with the capsid protein. Oligomer. Interacts with spike glycoprotein E1. Interacts with spike glycoprotein E2. Specific enzymatic cleavages in vivo yield mature proteins. Capsid protein is auto-cleaved during polyprotein translation, unmasking a signal peptide at the N-terminus of the precursor of E3/E2. The remaining polyprotein is then targeted to the host endoplasmic reticulum, where host signal peptidase cleaves it into pE2, 6K and E1 proteins. pE2 is further processed to mature E3 and E2 by host furin in trans-Golgi vesicle. Post-translationally, palmitoylated via thioester bonds. These palmitoylations may induce disruption of the C-terminus transmembrane. This would result in the reorientation of E2 C-terminus from lumenal to cytoplasmic side. In terms of processing, N-glycosylated. Palmitoylated via thioester bonds.

The protein resides in the virion. It is found in the host cytoplasm. The protein localises to the host cell membrane. Its subcellular location is the host nucleus. It localises to the virion membrane. The protein resides in the host Golgi apparatus. It is found in the host trans-Golgi network. The protein localises to the host endoplasmic reticulum. It catalyses the reaction Autocatalytic release of the core protein from the N-terminus of the togavirus structural polyprotein by hydrolysis of a -Trp-|-Ser- bond.. The channel activity is blocked by 5-N, N-Hexamethylene amiloride. Forms an icosahedral capsid with a T=4 symmetry composed of 240 copies of the capsid protein surrounded by a lipid membrane through which penetrate 80 spikes composed of trimers of E1-E2 heterodimers. The capsid protein binds to the viral RNA genome at a site adjacent to a ribosome binding site for viral genome translation following genome release. Possesses a protease activity that results in its autocatalytic cleavage from the nascent structural protein. Following its self-cleavage, the capsid protein transiently associates with ribosomes, and within several minutes the protein binds to viral RNA and rapidly assembles into icosahedric core particles. The resulting nucleocapsid eventually associates with the cytoplasmic domain of the spike glycoprotein E2 at the cell membrane, leading to budding and formation of mature virions. In case of infection, new virions attach to target cells and after clathrin-mediated endocytosis their membrane fuses with the host endosomal membrane. This leads to the release of the nucleocapsid into the cytoplasm, followed by an uncoating event necessary for the genomic RNA to become accessible. The uncoating might be triggered by the interaction of capsid proteins with ribosomes. Binding of ribosomes would release the genomic RNA since the same region is genomic RNA-binding and ribosome-binding. Specifically inhibits interleukin-1 receptor-associated kinase 1/IRAK1-dependent signaling during viral entry, representing a means by which the alphaviruses may evade innate immune detection and activation prior to viral gene expression. Functionally, provides the signal sequence for the translocation of the precursor of protein E3/E2 to the host endoplasmic reticulum. Furin-cleaved E3 remains associated with spike glycoprotein E1 and mediates pH protection of the latter during the transport via the secretory pathway. After virion release from the host cell, the assembly protein E3 is gradually released in the extracellular space. Its function is as follows. Plays a role in viral attachment to target host cell, by binding to the cell receptors VLDLR or LRP8/APOER2. Synthesized as a pE2 precursor which is processed by furin at the cell membrane just before virion budding, giving rise to E2-E1 heterodimer. The pE2-E1 heterodimer is stable, whereas E2-E1 is unstable and dissociate at low pH. pE2 is processed at the last step, presumably to avoid E1 fusion activation before its final export to cell surface. E2 C-terminus contains a transitory transmembrane that would be disrupted by palmitoylation, resulting in reorientation of the C-terminal tail from lumenal to cytoplasmic side. This step is critical since E2 C-terminus is involved in budding by interacting with capsid proteins. This release of E2 C-terminus in cytoplasm occurs lately in protein export, and precludes premature assembly of particles at the endoplasmic reticulum membrane. In terms of biological role, acts as a viroporin that participates in virus glycoprotein processing and transport to the plasma membrane, cell permeabilization and budding of viral particles. Disrupts the calcium homeostasis of the cell, probably at the endoplasmic reticulum level resulting in the increased levels of cytoplasmic calcium. Because of its lipophilic properties, the 6K protein is postulated to influence the selection of lipids that interact with the transmembrane domains of the glycoproteins, which, in turn, affects the deformability of the bilayer required for the extreme curvature that occurs as budding proceeds. Present in low amount in virions, about 3% compared to viral glycoproteins. Class II viral fusion protein. Fusion activity is inactive as long as E1 is bound to E2 in mature virion. After virus attachment to target cell via host VLDLR or LRP8/APOER2 and endocytosis, acidification of the endosome induces dissociation of E1/E2 heterodimer and concomitant trimerization of the E1 subunits. This E1 trimer is fusion active, and promotes release of viral nucleocapsid in cytoplasm after endosome and viral membrane fusion. Efficient fusion requires the presence of cholesterol and sphingolipid in the target membrane. The polypeptide is Structural polyprotein (Acrocephalus scirpaceus (Eurasian reed-warbler)).